The chain runs to 156 residues: Putative NrdI-like protein (156 aa).

This sequence belongs to the NrdI family.

The protein is Putative NrdI-like protein of Streptococcus pneumoniae serotype 4 (strain ATCC BAA-334 / TIGR4).